A 344-amino-acid chain; its full sequence is Ferrochelatase (344 aa).

Positions 214 and 295 each coordinate Fe cation.

It belongs to the ferrochelatase family.

The protein resides in the cytoplasm. It carries out the reaction heme b + 2 H(+) = protoporphyrin IX + Fe(2+). It functions in the pathway porphyrin-containing compound metabolism; protoheme biosynthesis; protoheme from protoporphyrin-IX: step 1/1. Its function is as follows. Catalyzes the ferrous insertion into protoporphyrin IX. This is Ferrochelatase from Rhizobium etli (strain ATCC 51251 / DSM 11541 / JCM 21823 / NBRC 15573 / CFN 42).